Here is a 350-residue protein sequence, read N- to C-terminus: Nicotinate-nucleotide--dimethylbenzimidazole phosphoribosyltransferase (350 aa).

The Proton acceptor role is filled by Glu316.

This sequence belongs to the CobT family.

It carries out the reaction 5,6-dimethylbenzimidazole + nicotinate beta-D-ribonucleotide = alpha-ribazole 5'-phosphate + nicotinate + H(+). It participates in nucleoside biosynthesis; alpha-ribazole biosynthesis; alpha-ribazole from 5,6-dimethylbenzimidazole: step 1/2. In terms of biological role, catalyzes the synthesis of alpha-ribazole-5'-phosphate from nicotinate mononucleotide (NAMN) and 5,6-dimethylbenzimidazole (DMB). The sequence is that of Nicotinate-nucleotide--dimethylbenzimidazole phosphoribosyltransferase from Pseudomonas syringae pv. tomato (strain ATCC BAA-871 / DC3000).